A 77-amino-acid chain; its full sequence is UPF0291 protein OB1671 (77 aa).

The tract at residues 56-77 (DPEGKDVTPQKLRDYQDRNKKH) is disordered. Basic and acidic residues predominate over residues 57–77 (PEGKDVTPQKLRDYQDRNKKH).

Belongs to the UPF0291 family.

The protein resides in the cytoplasm. The chain is UPF0291 protein OB1671 from Oceanobacillus iheyensis (strain DSM 14371 / CIP 107618 / JCM 11309 / KCTC 3954 / HTE831).